A 247-amino-acid polypeptide reads, in one-letter code: Probable phosphatase swp_1620 (247 aa).

9 residues coordinate Zn(2+): His8, His10, His16, His41, Glu74, His102, His132, Asp193, and His195.

Belongs to the PHP family. The cofactor is Zn(2+).

The chain is Probable phosphatase swp_1620 from Shewanella piezotolerans (strain WP3 / JCM 13877).